We begin with the raw amino-acid sequence, 216 residues long: 3,4-dihydroxy-2-butanone 4-phosphate synthase (216 aa).

D-ribulose 5-phosphate is bound by residues 33 to 34, D38, 146 to 150, and E170; these read RE and RRGHT. E34 provides a ligand contact to Mg(2+). H149 is a Mg(2+) binding site.

The protein belongs to the DHBP synthase family. Homodimer. Requires Mg(2+) as cofactor. Mn(2+) is required as a cofactor.

It carries out the reaction D-ribulose 5-phosphate = (2S)-2-hydroxy-3-oxobutyl phosphate + formate + H(+). The protein operates within cofactor biosynthesis; riboflavin biosynthesis; 2-hydroxy-3-oxobutyl phosphate from D-ribulose 5-phosphate: step 1/1. Its function is as follows. Catalyzes the conversion of D-ribulose 5-phosphate to formate and 3,4-dihydroxy-2-butanone 4-phosphate. This Pseudomonas putida (strain ATCC 47054 / DSM 6125 / CFBP 8728 / NCIMB 11950 / KT2440) protein is 3,4-dihydroxy-2-butanone 4-phosphate synthase.